Consider the following 89-residue polypeptide: Phytosulfokines 1 (89 aa).

Residues 1–22 form the signal peptide; that stretch reads MVNPGRTARALCLLCLALLLLG. The propeptide occupies 23–79; it reads QDTHSRKLLLQEKHSHGVGNGTTTTQEPSRENGGSTGSNNNGQLQFDSAKWEEFHTD. The segment at 33 to 70 is disordered; it reads QEKHSHGVGNGTTTTQEPSRENGGSTGSNNNGQLQFDS. Asn-42 carries N-linked (GlcNAc...) asparagine glycosylation. Sulfotyrosine is present on residues Tyr-80 and Tyr-82. Positions 85–89 are excised as a propeptide; the sequence is DVKKP.

This sequence belongs to the phytosulfokine family. Sulfation is important for activity and for the binding to a putative membrane receptor. Post-translationally, PSK-alpha is produced by endopeptidase digestion. PSK-beta is produced from PSK-alpha by exopeptidase digestion. Expressed throughout the seedling. More abundant in fragments containing shoot or root apexes where cells proliferate vigorously.

The protein resides in the secreted. Its function is as follows. Promotes plant cell differentiation, organogenesis and somatic embryogenesis as well as cell proliferation. The sequence is that of Phytosulfokines 1 (PSK1) from Oryza sativa subsp. japonica (Rice).